The primary structure comprises 271 residues: Ribosomal RNA small subunit methyltransferase A (271 aa).

Residues Asn-19, Leu-21, Gly-46, Glu-67, Asp-92, and Asn-113 each contribute to the S-adenosyl-L-methionine site.

Belongs to the class I-like SAM-binding methyltransferase superfamily. rRNA adenine N(6)-methyltransferase family. RsmA subfamily.

The protein localises to the cytoplasm. The catalysed reaction is adenosine(1518)/adenosine(1519) in 16S rRNA + 4 S-adenosyl-L-methionine = N(6)-dimethyladenosine(1518)/N(6)-dimethyladenosine(1519) in 16S rRNA + 4 S-adenosyl-L-homocysteine + 4 H(+). Specifically dimethylates two adjacent adenosines (A1518 and A1519) in the loop of a conserved hairpin near the 3'-end of 16S rRNA in the 30S particle. May play a critical role in biogenesis of 30S subunits. This chain is Ribosomal RNA small subunit methyltransferase A, found in Photobacterium profundum (strain SS9).